A 552-amino-acid chain; its full sequence is Phosphoglucomutase (552 aa).

Serine 143 acts as the Phosphoserine intermediate in catalysis. Mg(2+) is bound by residues serine 143, aspartate 295, aspartate 297, and aspartate 299.

This sequence belongs to the phosphohexose mutase family. Requires Mg(2+) as cofactor.

It catalyses the reaction alpha-D-glucose 1-phosphate = alpha-D-glucose 6-phosphate. It functions in the pathway glycolipid metabolism; diglucosyl-diacylglycerol biosynthesis. Its function is as follows. Catalyzes the interconversion between glucose-6-phosphate and alpha-glucose-1-phosphate. This is the first step in the biosynthesis of diglucosyl-diacylglycerol (Glc2-DAG), i.e. the predominant glycolipid found in the S.aureus membrane, which is also used as a membrane anchor for lipoteichoic acid (LTA). The polypeptide is Phosphoglucomutase (pgcA) (Staphylococcus aureus (strain MRSA252)).